The sequence spans 289 residues: uncharacterized protein (289 aa).

The N-terminal stretch at methionine 1–alanine 19 is a signal peptide. The next 2 helical transmembrane spans lie at glycine 90 to valine 110 and alanine 257 to alanine 277.

The protein localises to the cell membrane. This is an uncharacterized protein from Mycobacterium tuberculosis (strain ATCC 25618 / H37Rv).